The chain runs to 164 residues: Large ribosomal subunit protein uL10 (164 aa).

Belongs to the universal ribosomal protein uL10 family. As to quaternary structure, part of the ribosomal stalk of the 50S ribosomal subunit. The N-terminus interacts with L11 and the large rRNA to form the base of the stalk. The C-terminus forms an elongated spine to which L12 dimers bind in a sequential fashion forming a multimeric L10(L12)X complex.

Functionally, forms part of the ribosomal stalk, playing a central role in the interaction of the ribosome with GTP-bound translation factors. The chain is Large ribosomal subunit protein uL10 from Helicobacter pylori (strain P12).